The following is a 155-amino-acid chain: Putative pre-16S rRNA nuclease (155 aa).

It belongs to the YqgF nuclease family.

Its subcellular location is the cytoplasm. Functionally, could be a nuclease involved in processing of the 5'-end of pre-16S rRNA. This Wolbachia sp. subsp. Brugia malayi (strain TRS) protein is Putative pre-16S rRNA nuclease.